A 289-amino-acid chain; its full sequence is Proteasome assembly chaperone 1 (289 aa).

The disordered stretch occupies residues 1–38; the sequence is MAATFFGEVVKAPCRAGTEEEEEEEEQSRRDTPEDREV. At Ala-2 the chain carries N-acetylalanine. Thr-18 carries the post-translational modification Phosphothreonine. A compositionally biased stretch (basic and acidic residues) spans 27 to 38; the sequence is QSRRDTPEDREV. A Phosphothreonine modification is found at Thr-55. Ser-181 carries the phosphoserine modification. An N6-acetyllysine modification is found at Lys-265.

This sequence belongs to the PSMG1 family. As to quaternary structure, forms a heterodimer with PSMG2. The PSMG1-PSMG2 heterodimer interacts directly with the PSMA5 and PSMA7 proteasome alpha subunits. In terms of processing, degraded by the proteasome upon completion of 20S proteasome maturation. As to expression, highly expressed in testis with moderate expression in brain, liver and kidney and low levels in heart, skeletal muscle and pancreas.

It is found in the cytoplasm. The protein localises to the endoplasmic reticulum. Functionally, chaperone protein which promotes assembly of the 20S proteasome as part of a heterodimer with PSMG2. The PSMG1-PSMG2 heterodimer binds to the PSMA5 and PSMA7 proteasome subunits, promotes assembly of the proteasome alpha subunits into the heteroheptameric alpha ring and prevents alpha ring dimerization. In Mus musculus (Mouse), this protein is Proteasome assembly chaperone 1.